The primary structure comprises 526 residues: Peptide chain release factor 3 (526 aa).

Residues 9–277 (DKRRTFAIIS…GIVEWAPRPQ (269 aa)) enclose the tr-type G domain. GTP-binding positions include 18–25 (SHPDAGKT), 86–90 (DTPGH), and 140–143 (NKLD).

Belongs to the TRAFAC class translation factor GTPase superfamily. Classic translation factor GTPase family. PrfC subfamily.

The protein resides in the cytoplasm. Functionally, increases the formation of ribosomal termination complexes and stimulates activities of RF-1 and RF-2. It binds guanine nucleotides and has strong preference for UGA stop codons. It may interact directly with the ribosome. The stimulation of RF-1 and RF-2 is significantly reduced by GTP and GDP, but not by GMP. The chain is Peptide chain release factor 3 from Shewanella loihica (strain ATCC BAA-1088 / PV-4).